Reading from the N-terminus, the 328-residue chain is Malate dehydrogenase (328 aa).

An NAD(+)-binding site is contributed by 11–17; it reads GAAGQIG. Residues Arg-92 and Arg-98 each contribute to the substrate site. NAD(+)-binding positions include Asn-105, Gln-112, and 129 to 131; that span reads VGN. Substrate contacts are provided by Asn-131 and Arg-162. His-187 serves as the catalytic Proton acceptor.

The protein belongs to the LDH/MDH superfamily. MDH type 2 family.

The enzyme catalyses (S)-malate + NAD(+) = oxaloacetate + NADH + H(+). In terms of biological role, catalyzes the reversible oxidation of malate to oxaloacetate. The protein is Malate dehydrogenase of Coxiella burnetii (strain RSA 493 / Nine Mile phase I).